Here is a 1069-residue protein sequence, read N- to C-terminus: Enteropeptidase (1069 aa).

Residues 1-18 are Cytoplasmic-facing; sequence MKSSRDEAVGHHSISSFE. A helical; Signal-anchor for type II membrane protein transmembrane segment spans residues 19–47; sequence VMLSALFIMLMVFSIGLIAVSWLAVKESE. The Extracellular segment spans residues 48 to 1069; that stretch reads GDAALGKSHE…FIEWIHSFLH (1022 aa). In terms of domain architecture, SEA spans 54 to 169; it reads KSHEVRGTFK…NSIDITASLS (116 aa). 3 N-linked (GlcNAc...) asparagine glycosylation sites follow: Asn-147, Asn-197, and Asn-212. One can recognise an LDL-receptor class A 1 domain in the interval 227 to 268; the sequence is IECQPGSRPCAHAWNCVATDLFCDGEVNCPDGSDEDTGLCAT. 4 disulfide bridges follow: Cys-229–Cys-242, Cys-236–Cys-255, Cys-249–Cys-266, and Cys-270–Cys-298. One can recognise a CUB 1 domain in the interval 270–379; that stretch reads CDGRFLLTGD…IGFNATYSTF (110 aa). Asn-373, Asn-380, Asn-433, Asn-515, Asn-579, and Asn-675 each carry an N-linked (GlcNAc...) asparagine glycan. Residues 387–549 form the MAM domain; sequence YEKIDCTFDD…ISLTNGICSQ (163 aa). Residues Cys-569 and Cys-597 are joined by a disulfide bond. One can recognise a CUB 2 domain in the interval 569–679; that stretch reads CGGPFELWEP…KGFKANFTSG (111 aa). One can recognise an LDL-receptor class A 2 domain in the interval 686–724; the sequence is EPCQDDEFQCKDGNCIPLGNLCDSYPHCRDGSDEASCVR. 3 disulfides stabilise this stretch: Cys-688/Cys-700, Cys-695/Cys-713, and Cys-707/Cys-722. The SRCR domain occupies 723–816; it reads VRFLNGTRSN…LILLQCNHKS (94 aa). 4 N-linked (GlcNAc...) asparagine glycosylation sites follow: Asn-727, Asn-751, Asn-770, and Asn-791. Cystine bridges form between Cys-802-Cys-812, Cys-817-Cys-945, Cys-859-Cys-875, Cys-959-Cys-1027, Cys-991-Cys-1006, and Cys-1017-Cys-1045. The region spanning 830–1069 is the Peptidase S1 domain; that stretch reads IVGGSDAQAG…FIEWIHSFLH (240 aa). His-874 functions as the Charge relay system in the catalytic mechanism. Residue Asn-897 is glycosylated (N-linked (GlcNAc...) asparagine). The Charge relay system role is filled by Asp-925. N-linked (GlcNAc...) asparagine glycans are attached at residues Asn-936 and Asn-999. Residue Ser-1021 is the Charge relay system of the active site.

Belongs to the peptidase S1 family. In terms of assembly, heterodimer of a catalytic (light) chain and a multidomain (heavy) chain linked by a disulfide bond. The chains are derived from a single precursor that is cleaved by a trypsin-like protease.

Its subcellular location is the membrane. The catalysed reaction is Activation of trypsinogen by selective cleavage of 6-Lys-|-Ile-7 bond.. In terms of biological role, responsible for initiating activation of pancreatic proteolytic proenzymes (trypsin, chymotrypsin and carboxypeptidase A). It catalyzes the conversion of trypsinogen to trypsin which in turn activates other proenzymes including chymotrypsinogen, procarboxypeptidases, and proelastases. This Mus musculus (Mouse) protein is Enteropeptidase (Tmprss15).